Consider the following 319-residue polypeptide: MRSCFCVRRSRDPPPPQPPPPPPQRGTDQSTMPEVKDLSEALPETSMDPITGVGVVASRNRAPTGYDVVAQTADGVDADLWKDGLFKSKVTRYLCFTRSFSKENSHLGNVLVDMKLIDIKDTLPVGFIPIQETVDTQEVAFRKKRLCIKFIPRDSTEAAICDIRIMGRTKQAPPQYTFIGELNSMGIWYRMGRVPRNHDSSQPTTPSQSSAASTPAPNLPRHISLTLPATFRGRNSTRTDYEYQHSNLYAISAMDGVPFMISEKFSCVPESMQPFDLLGITIKSLAEIEKEYEYSFRTEQSAAARLPPSPTRCQQIPQS.

The interval 1–50 is disordered; sequence MRSCFCVRRSRDPPPPQPPPPPPQRGTDQSTMPEVKDLSEALPETSMDPI. Residues 13–24 are compositionally biased toward pro residues; the sequence is PPPPQPPPPPPQ. 2 positions are modified to phosphoserine: Ser46 and Ser101. An MABP domain is found at 47 to 193; it reads MDPITGVGVV…SMGIWYRMGR (147 aa). Residues Thr122, Thr204, and Thr205 each carry the phosphothreonine modification. Positions 195–222 are disordered; sequence PRNHDSSQPTTPSQSSAASTPAPNLPRH. Residues 200 to 216 show a composition bias toward low complexity; the sequence is SSQPTTPSQSSAASTPA. Ser224 carries the phosphoserine modification. Positions 254–303 constitute a UMA domain; sequence MDGVPFMISEKFSCVPESMQPFDLLGITIKSLAEIEKEYEYSFRTEQSAA. The tract at residues 299–319 is disordered; that stretch reads EQSAAARLPPSPTRCQQIPQS. The residue at position 309 (Ser309) is a Phosphoserine.

It belongs to the MVB12 family. Component of the ESCRT-I complex (endosomal sorting complex required for transport I) which consists of TSG101, VPS28, a VPS37 protein (VPS37A to -D) and MVB12A or MVB12B in a 1:1:1:1 stoichiometry. Interacts with TSG101; the association appears to be mediated by the TSG101-VPS37 binary subcomplex. Interacts with VPS28. Interacts with VPS37B; the association appears to be mediated by the TSG101-VPS37 binary subcomplex. Interacts with VPS37C; the association appears to be mediated by the TSG101-VPS37 binary subcomplex.

It localises to the endosome. It is found in the late endosome membrane. Its function is as follows. Component of the ESCRT-I complex, a regulator of vesicular trafficking process. Required for the sorting of endocytic ubiquitinated cargos into multivesicular bodies. This Homo sapiens (Human) protein is Multivesicular body subunit 12B (MVB12B).